We begin with the raw amino-acid sequence, 350 residues long: Putative zinc metalloprotease jhp_0242 (350 aa).

Zn(2+) is bound at residue His-16. Glu-17 is a catalytic residue. His-20 serves as a coordination point for Zn(2+). The next 5 membrane-spanning stretches (helical) occupy residues 43–63, 94–114, 249–269, 277–297, and 326–346; these read WFFKLFGTQFALSLIPLGGYV, LWILFGGAFFNFLFAVLVYFF, LIMGSASVKELSGVIGIVGAL, MLLLFGAFLSINLGILNLLPI, and LWLVGVGFLVFVMFLGLFNDI. In terms of domain architecture, PDZ spans 108–177; the sequence is AVLVYFFLAL…GELILEIERN (70 aa).

This sequence belongs to the peptidase M50B family. Zn(2+) serves as cofactor.

The protein resides in the cell inner membrane. The sequence is that of Putative zinc metalloprotease jhp_0242 from Helicobacter pylori (strain J99 / ATCC 700824) (Campylobacter pylori J99).